The following is a 442-amino-acid chain: Cyclic AMP receptor-like protein B (442 aa).

The Extracellular portion of the chain corresponds to 1-16; sequence MGGDIHLCSMILGKNH. A helical transmembrane segment spans residues 17–37; sequence LIFLYFANLFGSTLSFLATII. The Cytoplasmic portion of the chain corresponds to 38–219; the sequence is TIVFYLVKKY…PKKIDTLIFY (182 aa). Residues 83–166 form a disordered region; the sequence is YSSTPISIQN…LSSSDKNNTI (84 aa). Residues 91 to 103 are compositionally biased toward low complexity; the sequence is QNNNNKNNNLPKQ. The segment covering 112–122 has biased composition (polar residues); it reads INKNHNNYCNY. The span at 123 to 144 shows a compositional bias: low complexity; the sequence is STSATSSSSSSSSFSSTNSGSS. The span at 145-166 shows a compositional bias: polar residues; it reads YEYQQPQKNQQTLSSSDKNNTI. A helical transmembrane segment spans residues 220–240; it reads LSISDFIAVSGIIIEQLIIIF. At 241 to 255 the chain is on the extracellular side; that stretch reads NKEISKSIGFCIGER. Residues 256 to 276 form a helical membrane-spanning segment; sequence VSIHFGLLATLFWSNCIAYYL. Over 277 to 289 the chain is Cytoplasmic; that stretch reads LRETYELKPYNIR. A helical transmembrane segment spans residues 290–310; sequence FVYFHIVCWGMALIGVASLFF. The Extracellular segment spans residues 311–334; the sequence is SKIITVSNIDQGGSWCSVSSSYQL. The chain crosses the membrane as a helical span at residues 335–355; it reads YFWVIPLFVSFTWNLICYCLI. Over 356 to 382 the chain is Cytoplasmic; the sequence is YRKFNKIIGIYGIQSVQIKTIIIRKLS. A helical transmembrane segment spans residues 383–403; the sequence is FYLLAFLITWVWDVINNSIFL. The Extracellular segment spans residues 404 to 410; that stretch reads YEGKCPP. A helical membrane pass occupies residues 411–431; the sequence is FALWILQEFFSSGYGFFNSLA. The Cytoplasmic segment spans residues 432-442; sequence YAVTTRFYSRK.

It belongs to the G-protein coupled receptor 5 family.

It localises to the membrane. Its function is as follows. Receptor for cAMP. In Dictyostelium discoideum (Social amoeba), this protein is Cyclic AMP receptor-like protein B (crlB).